The chain runs to 520 residues: Cholesterol side-chain cleavage enzyme, mitochondrial (520 aa).

A mitochondrion-targeting transit peptide spans 1–39; that stretch reads MLARGLPLRSALVKACPPLLNTGREGWGHHRVGTGEGAG. A disordered region spans residues 27 to 48; the sequence is WGHHRVGTGEGAGISTRTPRPY. Cys-461 contacts heme.

Belongs to the cytochrome P450 family. Interacts with FDX1/adrenodoxin. It depends on heme as a cofactor.

Its subcellular location is the mitochondrion inner membrane. It catalyses the reaction 6 reduced [adrenodoxin] + cholesterol + 3 O2 + 6 H(+) = 4-methylpentanal + pregnenolone + 6 oxidized [adrenodoxin] + 4 H2O. The catalysed reaction is 2 reduced [adrenodoxin] + cholesterol + O2 + 2 H(+) = (22R)-hydroxycholesterol + 2 oxidized [adrenodoxin] + H2O. It carries out the reaction (22R)-hydroxycholesterol + 2 reduced [adrenodoxin] + O2 + 2 H(+) = (20R,22R)-20,22-dihydroxycholesterol + 2 oxidized [adrenodoxin] + H2O. The enzyme catalyses (20R,22R)-20,22-dihydroxycholesterol + 2 reduced [adrenodoxin] + O2 + 2 H(+) = 4-methylpentanal + pregnenolone + 2 oxidized [adrenodoxin] + 2 H2O. It participates in lipid metabolism; C21-steroid hormone metabolism. It functions in the pathway steroid metabolism; cholesterol metabolism. Functionally, a cytochrome P450 monooxygenase that catalyzes the side-chain hydroxylation and cleavage of cholesterol to pregnenolone, the precursor of most steroid hormones. Catalyzes three sequential oxidation reactions of cholesterol, namely the hydroxylation at C22 followed with the hydroxylation at C20 to yield 20R,22R-hydroxycholesterol that is further cleaved between C20 and C22 to yield the C21-steroid pregnenolone and 4-methylpentanal. Mechanistically, uses molecular oxygen inserting one oxygen atom into a substrate and reducing the second into a water molecule. Two electrons are provided by NADPH via a two-protein mitochondrial transfer system comprising flavoprotein FDXR (adrenodoxin/ferredoxin reductase) and nonheme iron-sulfur protein FDX1 or FDX2 (adrenodoxin/ferredoxin). In Capra hircus (Goat), this protein is Cholesterol side-chain cleavage enzyme, mitochondrial.